A 526-amino-acid chain; its full sequence is Protein MGF 505-2R (526 aa).

The protein belongs to the asfivirus MGF 505 family.

Plays a role in virus cell tropism, and may be required for efficient virus replication in macrophages. The sequence is that of Protein MGF 505-2R from African swine fever virus (isolate Pig/Kenya/KEN-50/1950) (ASFV).